Reading from the N-terminus, the 62-residue chain is Histone H1.2, embryonic (62 aa).

Residues 1-53 (HVVAAITALKERGGSSMKKQSVFIKKALKSGVEKGTLVQVKGKGASGSFKLGK) enclose the H15 domain.

This sequence belongs to the histone H1/H5 family.

The protein localises to the nucleus. It localises to the chromosome. Functionally, histones H1 are necessary for the condensation of nucleosome chains into higher-order structures. The chain is Histone H1.2, embryonic from Parechinus angulosus (Angulate sea urchin).